The sequence spans 255 residues: MRRIYLNTYEQINKVKKILRKHLKNNLIGTYMFGSGVESGLKPNSDLDFLVVVSEPLTDQSKEILIQKIRPISKKIGDKSNLRYIELTIIIQQEMVPWNHPPKQEFIYGEWLQELYEQGYIPQKELNSDLTIMLYQAKRKNKRIYGNYDLEELLPDIPFSDVRRAIMDSSEELIDNYQDDETNSILTLCRMILTMDTGKIIPKDIAGNAVAESSPLEHRERILLAVRSYLGENIEWTNENVNLTINYLNNRLKKL.

The catalysed reaction is spectinomycin + ATP = 9-O-adenylylspectinomycin + diphosphate. In terms of biological role, mediates bacterial resistance to the antibiotic spectinomycin but not streptomycin. This chain is Spectinomycin 9-adenylyltransferase, found in Enterococcus faecalis (Streptococcus faecalis).